A 472-amino-acid chain; its full sequence is Inhibitor of Apoptosis OPG037 (472 aa).

6 ANK repeats span residues Asp97 to Ala126, His130 to Asn161, Asp233 to Lys263, Phe267 to Asp297, Tyr322 to Asp351, and Met353 to Ser377.

Belongs to the orthopoxvirus OPG037 protein family. In terms of assembly, may interact with host caspase-9-Apaf-1 complex.

The protein resides in the host cytoplasm. Functionally, inhibits host apoptosis. Acts by associating with host apoptosome. The sequence is that of Inhibitor of Apoptosis OPG037 (OPG037) from Homo sapiens (Human).